We begin with the raw amino-acid sequence, 455 residues long: Periplasmic pH-dependent serine endoprotease DegQ (455 aa).

An N-terminal signal peptide occupies residues 1-27 (MKKQTQLLSALALSVGLTLSASFQAVA). Residues E59, H109, D139, G212, 212 to 214 (GNS), 230 to 234 (TAILA), and 269 to 273 (LGIKG) contribute to the substrate site. Catalysis depends on charge relay system residues H109 and D139. The active-site Charge relay system is the S214. PDZ domains follow at residues 258-349 (LIDF…LRNG) and 355-447 (EVTL…VRGN).

The protein belongs to the peptidase S1C family. In terms of assembly, degQ can reversibly switch between different oligomeric forms that represent inactive (6-mer) and active (12- and 24-mer) protease states. Substrate binding triggers the conversion of the resting DegQ trimer and hexamer into catalytically active 12- and 24-mers. The conversion of 6-mer (DegQ6) into 12-mer (DegQ12) or 24-mer (DegQ24) is crucial in regulating protease activity.

It is found in the periplasm. It carries out the reaction Acts on substrates that are at least partially unfolded. The cleavage site P1 residue is normally between a pair of hydrophobic residues, such as Val-|-Val.. Inhibited by diisopropylfluorophosphate (DFP). Functionally, degQ could degrade transiently denatured and unfolded proteins which accumulate in the periplasm following stress conditions. DegQ is efficient with Val-Xaa and Ile-Xaa peptide bonds, suggesting a preference for a beta-branched side chain amino acids. Only unfolded proteins devoid of disulfide bonds appear capable to be cleaved, thereby preventing non-specific proteolysis of folded proteins. DegQ can substitute for the periplasmic protease DegP. The polypeptide is Periplasmic pH-dependent serine endoprotease DegQ (degQ) (Escherichia coli (strain K12)).